Here is a 229-residue protein sequence, read N- to C-terminus: uncharacterized protein (229 aa).

The interval 1-102 (MKLLGRKKSY…AASKAQITDR (102 aa)) is disordered. Residues 73–94 (ARRKSLAPPKCHRAERRAKRAA) are compositionally biased toward basic residues. Transmembrane regions (helical) follow at residues 137–157 (LGLF…VPQL) and 159–179 (LYMS…GIIL).

The protein localises to the cell membrane. This is an uncharacterized protein from Mycobacterium leprae (strain TN).